A 74-amino-acid chain; its full sequence is MVSKSLIVLLLVSVLVSTFFTTEAYPASYDDDFDALDDLDGLDLDDLLDSEPADLVLLDMWANMLDSQDFEDFE.

An N-terminal signal peptide occupies residues 1–24; that stretch reads MVSKSLIVLLLVSVLVSTFFTTEA.

This sequence belongs to the non-disulfide-bridged peptide (NDBP) superfamily. Long chain multifunctional peptide (group 2) family. In terms of tissue distribution, expressed by the venom gland.

The protein resides in the secreted. May be an antimicrobial peptide. The sequence is that of Anionic peptide clone 9 from Tityus costatus (Brazilian scorpion).